Reading from the N-terminus, the 551-residue chain is Tetrachloroethene reductive dehalogenase (551 aa).

A signal peptide (tat-type signal) is located at residues 1–39; sequence MGEINRRNFLKVSILGAAAAAVASASAVKGMVSPLVADA. Positions 411 to 440 constitute a 4Fe-4S ferredoxin-type 1 domain; the sequence is PRKFGVREFCRLCKKCADACPAQAISHEKD. Residues Cys-420, Cys-423, Cys-426, Cys-430, Cys-467, Cys-478, Cys-481, and Cys-485 each coordinate [4Fe-4S] cluster. One can recognise a 4Fe-4S ferredoxin-type 2 domain in the interval 478–496; that stretch reads CSNCVAVCSWNKVETWNHD.

Belongs to the PceA family. [4Fe-4S] cluster serves as cofactor. Corrinoid is required as a cofactor. Post-translationally, predicted to be exported by the Tat system. The position of the signal peptide cleavage has not been experimentally proven.

It is found in the cell membrane. It carries out the reaction trichloroethene + chloride + A + H(+) = tetrachloroethene + AH2. The enzyme catalyses trichloroethene + AH2 = (Z)-1,2-dichloroethene + chloride + A + H(+). Catalyzes the reductive dechlorination of tetrachloroethene (PCE) to trichloroethene (TCE) and of trichloroethene to cis-1,2-dichloroethene (DCE). The protein is Tetrachloroethene reductive dehalogenase of Desulfitobacterium hafniense (Desulfitobacterium frappieri).